The chain runs to 89 residues: Small ribosomal subunit protein uS15 (89 aa).

It belongs to the universal ribosomal protein uS15 family. Part of the 30S ribosomal subunit. Forms a bridge to the 50S subunit in the 70S ribosome, contacting the 23S rRNA.

In terms of biological role, one of the primary rRNA binding proteins, it binds directly to 16S rRNA where it helps nucleate assembly of the platform of the 30S subunit by binding and bridging several RNA helices of the 16S rRNA. Forms an intersubunit bridge (bridge B4) with the 23S rRNA of the 50S subunit in the ribosome. The chain is Small ribosomal subunit protein uS15 from Pseudomonas fluorescens (strain ATCC BAA-477 / NRRL B-23932 / Pf-5).